Reading from the N-terminus, the 1134-residue chain is Tyrosine-protein kinase receptor Tie-1 (1134 aa).

Residues Met-1–Ser-22 form the signal peptide. The Extracellular segment spans residues Val-23–Gln-755. The Ig-like C2-type 1 domain maps to Cys-43–Ala-123. Residues Asn-81 and Asn-159 are each glycosylated (N-linked (GlcNAc...) asparagine). EGF-like domains are found at residues Gly-212–Glu-254, Ala-256–Gln-301, and Ala-303–Glu-343. 9 cysteine pairs are disulfide-bonded: Cys-226/Cys-235, Cys-229/Cys-242, Cys-244/Cys-253, Cys-266/Cys-276, Cys-270/Cys-289, Cys-291/Cys-300, Cys-313/Cys-325, Cys-319/Cys-331, and Cys-333/Cys-342. The Ig-like C2-type 2 domain occupies Pro-349–Asn-440. Fibronectin type-III domains are found at residues Pro-444–Pro-543, Gln-546–Ser-638, and Ala-642–Gly-736. 3 N-linked (GlcNAc...) asparagine glycosylation sites follow: Asn-501, Asn-592, and Asn-705. Residues Gln-756–Val-780 form a helical membrane-spanning segment. Over Cys-781–Ala-1134 the chain is Cytoplasmic. The region spanning Ile-835 to Val-1114 is the Protein kinase domain. Residues Ile-841–Val-849 and Lys-866 contribute to the ATP site. The active-site Proton acceptor is the Asp-975. A Phosphotyrosine; by autocatalysis modification is found at Tyr-1003.

It belongs to the protein kinase superfamily. Tyr protein kinase family. Tie subfamily. Heterodimer with TEK/TIE2. Interacts with SVEP1 (via C-terminus). Phosphorylated on tyrosine residues in response to ANGPT1, most likely by TEK/TIE2. As to expression, specifically expressed in developing vascular endothelial cells. Abundantly expressed in lung and heart, moderately in brain, liver and kidney, and weakly in thymus, spleen and testis.

The protein resides in the cell membrane. The enzyme catalyses L-tyrosyl-[protein] + ATP = O-phospho-L-tyrosyl-[protein] + ADP + H(+). Transmembrane tyrosine-protein kinase that may modulate TEK/TIE2 activity and contribute to the regulation of angiogenesis. In Mus musculus (Mouse), this protein is Tyrosine-protein kinase receptor Tie-1 (Tie1).